A 115-amino-acid polypeptide reads, in one-letter code: CRISPR-associated endoribonuclease Cas2 (115 aa).

Aspartate 22 lines the Mg(2+) pocket.

This sequence belongs to the CRISPR-associated endoribonuclease Cas2 protein family. Homodimer, forms a heterotetramer with a Cas1 homodimer. Mg(2+) is required as a cofactor.

In terms of biological role, CRISPR (clustered regularly interspaced short palindromic repeat), is an adaptive immune system that provides protection against mobile genetic elements (viruses, transposable elements and conjugative plasmids). CRISPR clusters contain sequences complementary to antecedent mobile elements and target invading nucleic acids. CRISPR clusters are transcribed and processed into CRISPR RNA (crRNA). Functions as a ssRNA-specific endoribonuclease. Involved in the integration of spacer DNA into the CRISPR cassette. The protein is CRISPR-associated endoribonuclease Cas2 of Flavobacterium psychrophilum (strain ATCC 49511 / DSM 21280 / CIP 103535 / JIP02/86).